An 89-amino-acid chain; its full sequence is Small ribosomal subunit protein bS20 (89 aa).

2 stretches are compositionally biased toward basic residues: residues 1–10 (MANIKSKIKS) and 17–29 (ARKR…SRVK). The tract at residues 1 to 29 (MANIKSKIKSIKTMEKARKRNSMIKSRVK) is disordered.

The protein belongs to the bacterial ribosomal protein bS20 family.

Binds directly to 16S ribosomal RNA. This Mycoplasmopsis pulmonis (strain UAB CTIP) (Mycoplasma pulmonis) protein is Small ribosomal subunit protein bS20.